The following is an 867-amino-acid chain: KH domain-containing protein akap-1 (867 aa).

The chain crosses the membrane as a helical span at residues 108–128 (HALLIALGGFSIAALFVWYIN). 2 disordered regions span residues 145 to 458 (SNGL…QKRV) and 481 to 523 (HENA…GLTT). Residues 152 to 162 (ATASDVQTENG) are compositionally biased toward polar residues. 4 stretches are compositionally biased toward basic and acidic residues: residues 186-211 (QQKDEDEKTQKKDAVQNEKPSIDKKQ), 218-239 (TEKKEEKTVEIHTETEETDHVA), 247-275 (SEHKEHDKKTKQKNDEPVSIDKKSEEIEV), and 298-307 (QFVKKEEPKL). Over residues 336–345 (TKMNDATSPL) the composition is skewed to polar residues. A compositionally biased stretch (basic and acidic residues) spans 363–383 (EMEKSFNEEEFRLNESSDIDR). A compositionally biased stretch (basic residues) spans 397–408 (NKNRSSQKRKGG). Basic and acidic residues-rich tracts occupy residues 441–458 (LTKEKSVEETPEKSQKRV) and 481–490 (HENASYEKSD). Over residues 494-507 (LDSQNSEASSQDSG) the composition is skewed to polar residues. One can recognise a KH domain in the interval 528–595 (LPMYEFEIPN…DEINHCLQML (68 aa)). The Tudor domain occupies 689–747 (PCQNGLLCAAPVGNAWFRAVTVQYFDETDEVFVKFVDYGGYSKMARQDLRQIRTDLMSL).

It is found in the membrane. The polypeptide is KH domain-containing protein akap-1 (Caenorhabditis elegans).